Here is a 234-residue protein sequence, read N- to C-terminus: Ribonuclease 3 (234 aa).

The RNase III domain occupies 6 to 134 (RKSLEERVGH…IVGALYLDGG (129 aa)). A Mg(2+)-binding site is contributed by Glu47. Asp51 is a catalytic residue. Mg(2+)-binding residues include Ser120 and Glu123. Glu123 is a catalytic residue. The DRBM domain maps to 162-231 (DYKTRLQELV…AKNALEMKYK (70 aa)).

It belongs to the ribonuclease III family. Homodimer. Requires Mg(2+) as cofactor.

It localises to the cytoplasm. The enzyme catalyses Endonucleolytic cleavage to 5'-phosphomonoester.. Its function is as follows. Digests double-stranded RNA. Involved in the processing of primary rRNA transcript to yield the immediate precursors to the large and small rRNAs (23S and 16S). Processes some mRNAs, and tRNAs when they are encoded in the rRNA operon. Processes pre-crRNA and tracrRNA of type II CRISPR loci if present in the organism. This Bdellovibrio bacteriovorus (strain ATCC 15356 / DSM 50701 / NCIMB 9529 / HD100) protein is Ribonuclease 3.